The chain runs to 118 residues: MVHLTKTLRFINNPGFRKFYYGLQGYNKYGLYYDDFYDYTDAAHLEAVRRLPPDLYDQHTYRLVRASQLEITKQFLPKEQWPSYEEDMDKGRFLTPYLDEVMKEKKEKEEWINFLSKD.

Positions 1–32 (MVHLTKTLRFINNPGFRKFYYGLQGYNKYGLY) are igE-binding. Immunodominant epitope; induces specific IgE antibody production in mice. Causes degranulation of rat basophilic leukemia (RBL) cells and the release of beta-hexosaminidase from them.

Belongs to the UQCRB/QCR7 family. In terms of assembly, component of the ubiquinol-cytochrome c oxidoreductase (cytochrome b-c1 complex, complex III, CIII), a multisubunit enzyme composed of 3 respiratory subunits cytochrome b, cytochrome c1 and Rieske protein, 2 core protein subunits, and additional low-molecular weight protein subunits. The complex exists as an obligatory dimer and forms supercomplexes (SCs) in the inner mitochondrial membrane with cytochrome c oxidase (complex IV, CIV).

It is found in the mitochondrion inner membrane. Its function is as follows. Component of the ubiquinol-cytochrome c oxidoreductase, a multisubunit transmembrane complex that is part of the mitochondrial electron transport chain which drives oxidative phosphorylation. The respiratory chain contains 3 multisubunit complexes succinate dehydrogenase (complex II, CII), ubiquinol-cytochrome c oxidoreductase (cytochrome b-c1 complex, complex III, CIII) and cytochrome c oxidase (complex IV, CIV), that cooperate to transfer electrons derived from NADH and succinate to molecular oxygen, creating an electrochemical gradient over the inner membrane that drives transmembrane transport and the ATP synthase. The cytochrome b-c1 complex catalyzes electron transfer from ubiquinol to cytochrome c, linking this redox reaction to translocation of protons across the mitochondrial inner membrane, with protons being carried across the membrane as hydrogens on the quinol. In the process called Q cycle, 2 protons are consumed from the matrix, 4 protons are released into the intermembrane space and 2 electrons are passed to cytochrome c. The chain is Cytochrome b-c1 complex subunit 7 from Dermatophagoides farinae (American house dust mite).